The sequence spans 543 residues: Small conductance calcium-activated potassium channel protein 1 (543 aa).

Residues 1-92 (MNSHSYNGSV…SGKPSNVGHR (92 aa)) are disordered. The span at 65–76 (DQDDDEDDEEDE) shows a compositional bias: acidic residues. Residues 111–131 (LIFGMFGIVVMVTETELSWGV) traverse the membrane as a helical segment. The helical transmembrane segment at 140 to 160 (FALKCLISLSTAILLGLVVLY) threads the bilayer. The chain crosses the membrane as a helical span at residues 179-199 (IAMTCERVFLISLELAVCAIH). The helical transmembrane segment at 228–248 (VLLSIPMFLRLYLLGRVMLLH) threads the bilayer. A helical membrane pass occupies residues 277 to 297 (LMTICPGTVLLVFSISSWIIA). An intramembrane region (pore-forming) is located at residues 317–337 (FLGAMWLISITFLSIGYGDMV). A helical membrane pass occupies residues 346-366 (VCLLTGIMGAGCTALVVAVVA). The interval 384–463 (DTQLTKRVKN…LTDLAKTQTV (80 aa)) is calmodulin-binding. The segment at 505–543 (QAIRPPPPPLPPRPGPGPQDQAARSSPCRWTPVAPSDCG) is disordered. The span at 508 to 521 (RPPPPPLPPRPGPG) shows a compositional bias: pro residues.

It belongs to the potassium channel KCNN family. KCa2.1/KCNN1 subfamily. In terms of assembly, homodimer. Heteromultimer with KCNN2 and KCNN3. The complex is composed of 4 channel subunits each of which binds to a calmodulin subunit which regulates the channel activity through calcium-binding. Interacts with calmodulin.

Its subcellular location is the membrane. The protein localises to the cytoplasm. The protein resides in the myofibril. It localises to the sarcomere. It is found in the z line. It carries out the reaction K(+)(in) = K(+)(out). Inhibited by bee venom neurotoxin apamin. Inhibited by d-tubocurarine and tetraethylammonium (TEA). Small conductance calcium-activated potassium channel that mediates the voltage-independent transmembrane transfer of potassium across the cell membrane through a constitutive interaction with calmodulin which binds the intracellular calcium allowing its opening. The current is characterized by a voltage-independent activation, an intracellular calcium concentration increase-dependent activation and a single-channel conductance of about 3 picosiemens. Also presents an inwardly rectifying current, thus reducing its already small outward conductance of potassium ions, which is particularly the case when the membrane potential displays positive values, above + 20 mV. Activation is followed by membrane hyperpolarization. Thought to regulate neuronal excitability by contributing to the slow component of synaptic afterhyperpolarization. This is Small conductance calcium-activated potassium channel protein 1 from Homo sapiens (Human).